A 403-amino-acid polypeptide reads, in one-letter code: Argininosuccinate synthase 1 (403 aa).

ATP-binding positions include 10–18 (SYSGGLDTS) and A37. Residues Y88 and S93 each coordinate L-citrulline. G118 contributes to the ATP binding site. Residues T120, N124, and D125 each contribute to the L-aspartate site. N124 serves as a coordination point for L-citrulline. L-citrulline is bound by residues R128, S179, S188, E264, and Y276.

Belongs to the argininosuccinate synthase family. Type 1 subfamily. As to quaternary structure, homotetramer.

It is found in the cytoplasm. The catalysed reaction is L-citrulline + L-aspartate + ATP = 2-(N(omega)-L-arginino)succinate + AMP + diphosphate + H(+). Its pathway is amino-acid biosynthesis; L-arginine biosynthesis; L-arginine from L-ornithine and carbamoyl phosphate: step 2/3. This chain is Argininosuccinate synthase 1, found in Rhizobium johnstonii (strain DSM 114642 / LMG 32736 / 3841) (Rhizobium leguminosarum bv. viciae).